The chain runs to 195 residues: Imidazoleglycerol-phosphate dehydratase (195 aa).

This sequence belongs to the imidazoleglycerol-phosphate dehydratase family.

The protein resides in the cytoplasm. The enzyme catalyses D-erythro-1-(imidazol-4-yl)glycerol 3-phosphate = 3-(imidazol-4-yl)-2-oxopropyl phosphate + H2O. It participates in amino-acid biosynthesis; L-histidine biosynthesis; L-histidine from 5-phospho-alpha-D-ribose 1-diphosphate: step 6/9. The chain is Imidazoleglycerol-phosphate dehydratase from Cupriavidus taiwanensis (strain DSM 17343 / BCRC 17206 / CCUG 44338 / CIP 107171 / LMG 19424 / R1) (Ralstonia taiwanensis (strain LMG 19424)).